The following is a 162-amino-acid chain: Fibroblast growth factor 22 (162 aa).

The N-terminal stretch at 1–22 is a signal peptide; it reads MRSRLWLGLAWLLLARAPGAPG.

Belongs to the heparin-binding growth factors family. As to quaternary structure, interacts with FGFR1 and FGFR2. Interacts with FGFBP1. Preferentially expressed in skin; low expression in brain. Expressed in the inner root sheath of the hair follicle.

Its subcellular location is the secreted. In terms of biological role, plays a role in the fasting response, glucose homeostasis, lipolysis and lipogenesis. Can stimulate cell proliferation (in vitro). May be involved in hair development. In Mus musculus (Mouse), this protein is Fibroblast growth factor 22 (Fgf22).